The primary structure comprises 103 residues: N(4)-acetylcytidine amidohydrolase (103 aa).

In terms of domain architecture, ASCH spans 6–94 (ITFFQRFQND…IAEIYPNQTQ (89 aa)). The active-site Proton acceptor is Lys-21. Thr-24 (nucleophile) is an active-site residue. Glu-74 functions as the Proton donor in the catalytic mechanism.

The protein belongs to the N(4)-acetylcytidine amidohydrolase family.

The enzyme catalyses N(4)-acetylcytidine + H2O = cytidine + acetate + H(+). It catalyses the reaction N(4)-acetyl-2'-deoxycytidine + H2O = 2'-deoxycytidine + acetate + H(+). It carries out the reaction N(4)-acetylcytosine + H2O = cytosine + acetate + H(+). Its function is as follows. Catalyzes the hydrolysis of N(4)-acetylcytidine (ac4C). The protein is N(4)-acetylcytidine amidohydrolase (yqfB) of Salmonella heidelberg (strain SL476).